Here is a 577-residue protein sequence, read N- to C-terminus: Aspartate--tRNA(Asp/Asn) ligase (577 aa).

Position 171 (Glu-171) interacts with L-aspartate. The aspartate stretch occupies residues 195–198 (QLFK). Arg-217 contributes to the L-aspartate binding site. ATP is bound by residues 217-219 (RDE) and Gln-226. Residue His-444 coordinates L-aspartate. Position 474 (Glu-474) interacts with ATP. Arg-481 contacts L-aspartate. 526 to 529 (GFDR) is an ATP binding site.

It belongs to the class-II aminoacyl-tRNA synthetase family. Type 1 subfamily. As to quaternary structure, homodimer.

The protein localises to the cytoplasm. It carries out the reaction tRNA(Asx) + L-aspartate + ATP = L-aspartyl-tRNA(Asx) + AMP + diphosphate. Its function is as follows. Aspartyl-tRNA synthetase with relaxed tRNA specificity since it is able to aspartylate not only its cognate tRNA(Asp) but also tRNA(Asn). Reaction proceeds in two steps: L-aspartate is first activated by ATP to form Asp-AMP and then transferred to the acceptor end of tRNA(Asp/Asn). The sequence is that of Aspartate--tRNA(Asp/Asn) ligase from Helicobacter pylori (strain G27).